Consider the following 116-residue polypeptide: Alpha-defensin 29 (116 aa).

Positions 1-19 (MKTLVLLSALVLPCFQVQA) are cleaved as a signal peptide. The propeptide occupies 20–60 (DPIQNTDEETKTEEQPEEEDQAVSVSFGGTEGSALQDVAQR). The disordered stretch occupies residues 22-44 (IQNTDEETKTEEQPEEEDQAVSV). 9 consecutive repeat copies span residues 65–67 (CRK), 68–70 (CRV), 71–73 (CQK), 74–76 (CQV), 77–79 (CQK), 80–82 (CPV), 83–85 (CPT), 86–88 (CPQ), and 89–91 (CPK). Positions 65 to 70 (CRKCRV) are 2 X 3 AA tandem repeats of C-R-X. The 3 X 3 AA tandem repeats of C-Q-X stretch occupies residues 71–79 (CQKCQVCQK). A 4 X 3 AA tandem repeats of C-P-X region spans residues 80 to 91 (CPVCPTCPQCPK).

The protein belongs to the alpha-defensin family. Small bowel.

It is found in the secreted. Apparent precursor of a secreted, cationic, proline- and cysteine-rich peptide that contains Cys-Pro-Xaa repeats. Unlike cryptdin, the proposed mature peptide region lacks the structural motif characteristic of defensins. This Mus musculus (Mouse) protein is Alpha-defensin 29.